We begin with the raw amino-acid sequence, 245 residues long: 1-(5-phosphoribosyl)-5-[(5-phosphoribosylamino)methylideneamino] imidazole-4-carboxamide isomerase (245 aa).

The Proton acceptor role is filled by Asp-7. Asp-129 serves as the catalytic Proton donor.

Belongs to the HisA/HisF family.

It is found in the cytoplasm. The enzyme catalyses 1-(5-phospho-beta-D-ribosyl)-5-[(5-phospho-beta-D-ribosylamino)methylideneamino]imidazole-4-carboxamide = 5-[(5-phospho-1-deoxy-D-ribulos-1-ylimino)methylamino]-1-(5-phospho-beta-D-ribosyl)imidazole-4-carboxamide. It participates in amino-acid biosynthesis; L-histidine biosynthesis; L-histidine from 5-phospho-alpha-D-ribose 1-diphosphate: step 4/9. The chain is 1-(5-phosphoribosyl)-5-[(5-phosphoribosylamino)methylideneamino] imidazole-4-carboxamide isomerase from Shewanella halifaxensis (strain HAW-EB4).